The sequence spans 378 residues: Probable protein phosphatase 2C 55 (378 aa).

Disordered stretches follow at residues 1–59 and 79–115; these read MRRH…ASKG and EGEASSRGPAASRGGRRGRNSKRQPPRSRFDGDGVGC. Residues 7-26 show a composition bias toward low complexity; it reads LGLLRRAAASSTSAASSRAG. Basic residues predominate over residues 92-104; it reads GGRRGRNSKRQPP. Residues 122–369 form the PPM-type phosphatase domain; sequence SWGYSSFQGR…DNVTCIVLQF (248 aa). Residues Asp-158, Gly-159, Asp-321, and Asp-360 each coordinate Mn(2+).

Belongs to the PP2C family. It depends on Mg(2+) as a cofactor. Mn(2+) serves as cofactor.

The enzyme catalyses O-phospho-L-seryl-[protein] + H2O = L-seryl-[protein] + phosphate. It catalyses the reaction O-phospho-L-threonyl-[protein] + H2O = L-threonyl-[protein] + phosphate. The chain is Probable protein phosphatase 2C 55 from Oryza sativa subsp. japonica (Rice).